The chain runs to 138 residues: MRTLWIMAVLLLGVEGSVIELGKMVFQETGKNPVKNYGLYGCNCGVGKRGKPVDATDSCCFVHRCCYKKVTGCDPKKDRYSYSWENKAIVCGEKNPPCLKQVCECDKAVAICLRENLGTYDKKHRVTMKFLCKAPESC.

Positions 1 to 16 (MRTLWIMAVLLLGVEG) are cleaved as a signal peptide. Disulfide bonds link Cys42-Cys132, Cys44-Cys60, Cys59-Cys112, Cys65-Cys138, Cys66-Cys105, Cys73-Cys98, and Cys91-Cys103. Positions 122–133 (KKHRVTMKFLCK) are important for membrane-damaging activities in eukaryotes and bacteria; heparin-binding.

This sequence belongs to the phospholipase A2 family. Group II subfamily. R49 sub-subfamily. In terms of assembly, homodimer; non-covalently linked. Expressed by the venom gland.

The protein localises to the secreted. In terms of biological role, snake venom phospholipase A2 homolog that lacks enzymatic activity. Exhibits potent myotoxicity causing myonecrosis and edema in the gastrocnemius muscle of mice. Is also able to stimulate the release of IL12 (IL12A-IL12B), TNF-alpha (TNF), IL6 and IL1-beta (IL1B) from human monocytes, and induce IL2, TNFalpha and IL6 release from T-cells. A model of myotoxic mechanism has been proposed: an apo Lys49-PLA2 is activated by the entrance of a hydrophobic molecule (e.g. fatty acid) at the hydrophobic channel of the protein leading to a reorientation of a monomer. This reorientation causes a transition between 'inactive' to 'active' states, causing alignment of C-terminal and membrane-docking sites (MDoS) side-by-side and putting the membrane-disruption sites (MDiS) in the same plane, exposed to solvent and in a symmetric position for both monomers. The MDoS region stabilizes the toxin on membrane by the interaction of charged residues with phospholipid head groups. Subsequently, the MDiS region destabilizes the membrane with penetration of hydrophobic residues. This insertion causes a disorganization of the membrane, allowing an uncontrolled influx of ions (i.e. calcium and sodium), and eventually triggering irreversible intracellular alterations and cell death. In Protobothrops mucrosquamatus (Taiwan habu), this protein is Basic phospholipase A2 homolog promutoxin.